We begin with the raw amino-acid sequence, 746 residues long: Polyribonucleotide nucleotidyltransferase (746 aa).

Residues D520 and D526 each coordinate Mg(2+). A KH domain is found at 586 to 648 (PRIITVKVPV…EAARAAVNAI (63 aa)). The S1 motif domain occupies 657 to 729 (GERYLGTVVK…PRGKLSLVPV (73 aa)).

The protein belongs to the polyribonucleotide nucleotidyltransferase family. The cofactor is Mg(2+).

Its subcellular location is the cytoplasm. It catalyses the reaction RNA(n+1) + phosphate = RNA(n) + a ribonucleoside 5'-diphosphate. Involved in mRNA degradation. Catalyzes the phosphorolysis of single-stranded polyribonucleotides processively in the 3'- to 5'-direction. In Kineococcus radiotolerans (strain ATCC BAA-149 / DSM 14245 / SRS30216), this protein is Polyribonucleotide nucleotidyltransferase.